Reading from the N-terminus, the 453-residue chain is Bifunctional protein GlmU (453 aa).

The pyrophosphorylase stretch occupies residues 1 to 225 (MNIVILAAGT…EWETLGVNSK (225 aa)). UDP-N-acetyl-alpha-D-glucosamine is bound by residues 6 to 9 (LAAG), lysine 20, glutamine 71, 76 to 77 (GT), 98 to 100 (YGD), glycine 135, glutamate 150, asparagine 165, and asparagine 223. Residue aspartate 100 participates in Mg(2+) binding. Mg(2+) is bound at residue asparagine 223. The interval 226-246 (QQLAELERIHQRNVADDLLVA) is linker. The segment at 247 to 453 (GVTIADPARI…GYVRPTKKKS (207 aa)) is N-acetyltransferase. Positions 329 and 347 each coordinate UDP-N-acetyl-alpha-D-glucosamine. Histidine 359 functions as the Proton acceptor in the catalytic mechanism. Positions 362 and 373 each coordinate UDP-N-acetyl-alpha-D-glucosamine. Acetyl-CoA is bound by residues alanine 376, 382-383 (NY), serine 401, and alanine 419.

This sequence in the N-terminal section; belongs to the N-acetylglucosamine-1-phosphate uridyltransferase family. In the C-terminal section; belongs to the transferase hexapeptide repeat family. As to quaternary structure, homotrimer. The cofactor is Mg(2+).

It is found in the cytoplasm. The enzyme catalyses alpha-D-glucosamine 1-phosphate + acetyl-CoA = N-acetyl-alpha-D-glucosamine 1-phosphate + CoA + H(+). It carries out the reaction N-acetyl-alpha-D-glucosamine 1-phosphate + UTP + H(+) = UDP-N-acetyl-alpha-D-glucosamine + diphosphate. It functions in the pathway nucleotide-sugar biosynthesis; UDP-N-acetyl-alpha-D-glucosamine biosynthesis; N-acetyl-alpha-D-glucosamine 1-phosphate from alpha-D-glucosamine 6-phosphate (route II): step 2/2. The protein operates within nucleotide-sugar biosynthesis; UDP-N-acetyl-alpha-D-glucosamine biosynthesis; UDP-N-acetyl-alpha-D-glucosamine from N-acetyl-alpha-D-glucosamine 1-phosphate: step 1/1. Its pathway is bacterial outer membrane biogenesis; LPS lipid A biosynthesis. Its function is as follows. Catalyzes the last two sequential reactions in the de novo biosynthetic pathway for UDP-N-acetylglucosamine (UDP-GlcNAc). The C-terminal domain catalyzes the transfer of acetyl group from acetyl coenzyme A to glucosamine-1-phosphate (GlcN-1-P) to produce N-acetylglucosamine-1-phosphate (GlcNAc-1-P), which is converted into UDP-GlcNAc by the transfer of uridine 5-monophosphate (from uridine 5-triphosphate), a reaction catalyzed by the N-terminal domain. This Paraburkholderia phymatum (strain DSM 17167 / CIP 108236 / LMG 21445 / STM815) (Burkholderia phymatum) protein is Bifunctional protein GlmU.